A 493-amino-acid polypeptide reads, in one-letter code: Hexokinase-like 1 protein (493 aa).

Residues 38-488 enclose the Hexokinase domain; the sequence is ASTCPILTKF…SGLGAALLAA (451 aa). Residues 93–232 form a hexokinase small subdomain region; sequence SGNEEGLFYA…GLDMRVSALV (140 aa). 3 residues coordinate ADP: Gly107, Thr108, and Asn109. D-glucose-binding residues include Thr198, Lys199, Asn233, and Asp234. The segment at 233–477 is hexokinase large subdomain; that stretch reads NDGVGTLAGA…SHVAIKHTKD (245 aa). ADP is bound at residue Thr257. Residues Asn260, Glu287, and Glu317 each coordinate D-glucose. An ADP-binding site is contributed by Ala442.

This sequence belongs to the hexokinase family.

It catalyses the reaction a D-hexose + ATP = a D-hexose 6-phosphate + ADP + H(+). It carries out the reaction D-fructose + ATP = D-fructose 6-phosphate + ADP + H(+). The catalysed reaction is D-glucose + ATP = D-glucose 6-phosphate + ADP + H(+). It participates in carbohydrate metabolism; hexose metabolism. Its pathway is carbohydrate degradation; glycolysis; D-glyceraldehyde 3-phosphate and glycerone phosphate from D-glucose: step 1/4. In terms of biological role, fructose and glucose phosphorylating enzyme. This Arabidopsis thaliana (Mouse-ear cress) protein is Hexokinase-like 1 protein.